The chain runs to 252 residues: Demethylmenaquinone methyltransferase (252 aa).

S-adenosyl-L-methionine is bound by residues Thr-64, Asp-85, and 112-113 (NA).

It belongs to the class I-like SAM-binding methyltransferase superfamily. MenG/UbiE family.

It carries out the reaction a 2-demethylmenaquinol + S-adenosyl-L-methionine = a menaquinol + S-adenosyl-L-homocysteine + H(+). The protein operates within quinol/quinone metabolism; menaquinone biosynthesis; menaquinol from 1,4-dihydroxy-2-naphthoate: step 2/2. In terms of biological role, methyltransferase required for the conversion of demethylmenaquinol (DMKH2) to menaquinol (MKH2). The polypeptide is Demethylmenaquinone methyltransferase (Lactococcus lactis subsp. lactis (strain IL1403) (Streptococcus lactis)).